Here is a 325-residue protein sequence, read N- to C-terminus: tRNA U34 carboxymethyltransferase (325 aa).

Carboxy-S-adenosyl-L-methionine is bound by residues Lys-91, Trp-105, Lys-110, Gly-130, 152-154, Met-196, Tyr-200, and Arg-315; that span reads DPS.

It belongs to the class I-like SAM-binding methyltransferase superfamily. CmoB family. As to quaternary structure, homotetramer.

It carries out the reaction carboxy-S-adenosyl-L-methionine + 5-hydroxyuridine(34) in tRNA = 5-carboxymethoxyuridine(34) in tRNA + S-adenosyl-L-homocysteine + H(+). Catalyzes carboxymethyl transfer from carboxy-S-adenosyl-L-methionine (Cx-SAM) to 5-hydroxyuridine (ho5U) to form 5-carboxymethoxyuridine (cmo5U) at position 34 in tRNAs. This Aeromonas salmonicida (strain A449) protein is tRNA U34 carboxymethyltransferase.